The primary structure comprises 172 residues: Cell division protein SepF (172 aa).

Positions 18–73 are disordered; the sequence is RRYDEEDLPDEELTTEVYSDDGYEPSSEVTQLHHHDSNEQHARGHKAVQHRRRSEL. A compositionally biased stretch (acidic residues) spans 22–40; sequence EEDLPDEELTTEVYSDDGY. The segment covering 48–59 has biased composition (basic and acidic residues); that stretch reads QLHHHDSNEQHA. The span at 60–70 shows a compositional bias: basic residues; sequence RGHKAVQHRRR.

The protein belongs to the SepF family. As to quaternary structure, homodimer. Interacts with FtsZ.

The protein resides in the cytoplasm. Functionally, cell division protein that is part of the divisome complex and is recruited early to the Z-ring. Probably stimulates Z-ring formation, perhaps through the cross-linking of FtsZ protofilaments. Its function overlaps with FtsA. This Cutibacterium acnes (strain DSM 16379 / KPA171202) (Propionibacterium acnes) protein is Cell division protein SepF.